Reading from the N-terminus, the 3902-residue chain is Hybrid PKS-NRPS synthetase pynA (3902 aa).

The tract at residues 1 to 25 (MDTPLSSSEISPRFSNTVPSSVSSM) is disordered. The Ketosynthase family 3 (KS3) domain occupies 29–441 (ADPSVIVGLA…GTNAHVILDA (413 aa)). Residues C201, H324, and H362 each act as for beta-ketoacyl synthase activity in the active site. A malonyl-CoA:ACP transacylase (MAT) domain region spans residues 555–868 (VFTGQGAQWF…PYLASLTRGV (314 aa)). S647 (for malonyltransferase activity) is an active-site residue. The N-terminal hotdog fold stretch occupies residues 945–1080 (HSILGARMPG…GLVSVETNAL (136 aa)). The segment at 945 to 1256 (HSILGARMPG…LEVTALGSDK (312 aa)) is dehydratase (DH) domain. In terms of domain architecture, PKS/mFAS DH spans 945-1258 (HSILGARMPG…VTALGSDKTD (314 aa)). The active-site Proton acceptor; for dehydratase activity is H977. Residues 1100-1258 (QESIPAETLY…VTALGSDKTD (159 aa)) are C-terminal hotdog fold. The active-site Proton donor; for dehydratase activity is D1164. The interval 1629-1945 (GLLETLVFED…MGKHTGKVVL (317 aa)) is enoyl reductase (ER) domain. A ketoreductase (KR) domain region spans residues 1971 to 2143 (TYLLVGGLGG…AGTTMNCGMI (173 aa)). One can recognise a Carrier 1 domain in the interval 2251-2328 (ERTTLVLSAF…ALVTKASGLI (78 aa)). At S2288 the chain carries O-(pantetheine 4'-phosphoryl)serine. Residues 2337-2350 (KAENVDNEGAKGNE) show a composition bias toward basic and acidic residues. The segment at 2337–2364 (KAENVDNEGAKGNEDQEVETQQGQLNQP) is disordered. A condensation (C) domain 7 region spans residues 2374-2816 (VPMSSFQQRL…AEVNLCGALE (443 aa)). The interval 2836-3248 (SVGVCQRIME…NGLLTFKGRI (413 aa)) is adenylation (A) domain 8. In terms of domain architecture, Carrier 2 spans 3391 to 3467 (GDDAEILQGV…AIAGMIQKQL (77 aa)). An O-(pantetheine 4'-phosphoryl)serine modification is found at S3427. The interval 3515–3774 (LTGIDTFIGL…VDFLPVDALT (260 aa)) is thioesterase (TE) domain.

The protein in the C-terminal section; belongs to the NRP synthetase family.

The protein operates within secondary metabolite biosynthesis. In terms of biological role, hybrid PKS-NRPS synthetase; part of the gene cluster that mediates the biosynthesis of pyranonigrins, a family of antioxidative compounds. The first step of pyranonigrins biosynthesis is performed by the hybrid PKS-NRPS synthetase that condenses 6 malonyl-CoA units to an acetyl starter unit, to form a 1,3,5-trioxotetradecane-6,8-dienyl-ACP. The enoyl reductase (ER) domain of pynA is likely to be functional during the first two rounds of polyketide chain extension, to generate the saturated C-C bonds of the alkyl side chain. PynA subsequently forms the amide bond between the acyl chain and L-serine. Although pynA has a terminal reductase domain, it appears to require the thioesterase pynI for the release of the straight-chain intermediate from pynA via the formation of a tetramic acid pyranonigrin J. The methyltransferase pynC then coverts pyranonigrin J to pyranonigrin I via N-methylation. The FAD-dependent monooxygenase pynG catalyzes an epoxidation-mediated cyclization to form the dihydro-gamma-pyrone moiety, followed by pynD-catalyzed oxidation of the alcohol to the ketone and enolization to yield the characteristic tetramic acid-fused gamma-pyrone core of pyranonigrin H. Pyranonigrin H is substrate of pynH for dehydration-mediated exo-methylene formation from the serine side chain to produce pyranonigrin E, before the oxidase pynE reduces the exo-methylene of pyranonigrin E into a pendant methyl to form pyranonigrin G. The FAD-linked oxidoreductase pynB performs the reverse reaction and converts pyranonigrin G back to pyranonigrin E. This Aspergillus niger (strain ATCC MYA-4892 / CBS 513.88 / FGSC A1513) protein is Hybrid PKS-NRPS synthetase pynA.